The chain runs to 113 residues: Con-Ins G3 (113 aa).

Residues 1-21 (MTTSFYFLLVALGLLLYVCQS) form the signal peptide. Positions 22–29 (SFGNQHTR) are excised as a propeptide. Pro-34 is modified (4-hydroxyproline; partial). 3 disulfides stabilise this stretch: Cys-38-Cys-99, Cys-50-Cys-112, and Cys-98-Cys-103. Glu-41 is subject to 4-carboxyglutamate. The residue at position 51 (His-51) is a Histidine amide. Positions 52 to 92 (GKRNDAGKKRGRASPLWQRQGFLSMLKAKRNEAFFLQRDGR) are cleaved as a propeptide — c peptide. Residue Glu-96 is modified to 4-carboxyglutamate. 4-hydroxyproline; partial is present on Pro-102.

The protein belongs to the insulin family. As to quaternary structure, heterodimer of A and B chains; disulfide-linked. It is noteworthy that in this dimer, in contrast to Con-Ins G1, the chain B is amidated and not the chain A. Expressed by the venom gland.

The protein resides in the secreted. This venom insulin, from a fish-hunting cone snail, facilitates prey capture by rapidly inducing hypoglycemic shock. It is one of the smallest known insulin found in nature and lacks the C-terminal segment of the B chain that, in human insulin, mediates engagement of the insulin receptor (INSR) and assembly of the hormone's hexameric storage form. Despite lacking this segment, it both binds and activates human insulin receptor (long isoform (HIR-B)) with a high potency (EC(50)=242 nM). In vivo, intraperitoneal injection of this peptide into zebrafish lowers blood glucose with a lower potency than human insulin. In addition, when applied to water, this peptide reduces overall locomotor activity of zebrafish larvae, observed as a significant decrease in the percentage of time spent swimming and movement frequency. When tested on a mouse model of diabetes, this insulin also lowers blood glucose with a 10-fold lower potency than human insulin. This is Con-Ins G3 from Conus geographus (Geography cone).